The sequence spans 199 residues: Recombination protein RecR (199 aa).

A C4-type zinc finger spans residues 56–71; sequence CQRCNTFTEGDICERC. Residues 79–174 form the Toprim domain; the sequence is ELLCVVETPV…GVTRIARGVP (96 aa).

This sequence belongs to the RecR family.

In terms of biological role, may play a role in DNA repair. It seems to be involved in an RecBC-independent recombinational process of DNA repair. It may act with RecF and RecO. This chain is Recombination protein RecR, found in Dechloromonas aromatica (strain RCB).